The primary structure comprises 368 residues: Quinolinate synthase (368 aa).

Iminosuccinate contacts are provided by His46 and Ser63. [4Fe-4S] cluster is bound at residue Cys110. Iminosuccinate contacts are provided by residues 141–143 and Ser162; that span reads YVN. Residue Cys230 coordinates [4Fe-4S] cluster. Residues 256 to 258 and Thr273 contribute to the iminosuccinate site; that span reads HPE. Cys320 is a binding site for [4Fe-4S] cluster.

It belongs to the quinolinate synthase family. Type 3 subfamily. [4Fe-4S] cluster serves as cofactor.

Its subcellular location is the cytoplasm. It catalyses the reaction iminosuccinate + dihydroxyacetone phosphate = quinolinate + phosphate + 2 H2O + H(+). The protein operates within cofactor biosynthesis; NAD(+) biosynthesis; quinolinate from iminoaspartate: step 1/1. Functionally, catalyzes the condensation of iminoaspartate with dihydroxyacetone phosphate to form quinolinate. The polypeptide is Quinolinate synthase (Bacillus cereus (strain ZK / E33L)).